The following is a 401-amino-acid chain: Dual specificity mitogen-activated protein kinase kinase 2 (401 aa).

Methionine 1 carries the post-translational modification N-acetylmethionine. Position 23 is a phosphoserine (serine 23). The region spanning 72-370 (FERISELGAG…LKLLMNHAFI (299 aa)) is the Protein kinase domain. Residues 78–86 (LGAGNGGVV) and lysine 101 contribute to the ATP site. The active-site Proton acceptor is the aspartate 194. Phosphoserine; by RAF occurs at positions 222 and 226. The segment at 282 to 310 (PVVDGADGEPHSVSPRPRPPGRPISVGHG) is disordered. Phosphoserine is present on residues serine 293, serine 295, and serine 306. Threonine 395 and threonine 397 each carry phosphothreonine.

This sequence belongs to the protein kinase superfamily. STE Ser/Thr protein kinase family. MAP kinase kinase subfamily. As to quaternary structure, interacts with MORG1. Interacts with SGK1. Interacts with KSR1. Interacts with KSR1 and BRAF; the interaction with KSR1 mediates KSR1-BRAF dimerization. Interacts with GLS. It depends on Mg(2+) as a cofactor. Phosphorylation on Ser/Thr by MAP kinase kinase kinases (RAF or MEKK1) positively regulates the kinase activity. Phosphorylated by MAP2K1/MEK1. Low levels of autophosphorylation have been observed. In terms of tissue distribution, expressed in adult intestine, kidney, liver, lung, pancreas, spleen, thymus, and at high levels in the neonatal brain. Lower expression is found in adult brain and heart.

The protein localises to the cytoplasm. The protein resides in the membrane. The enzyme catalyses L-seryl-[protein] + ATP = O-phospho-L-seryl-[protein] + ADP + H(+). The catalysed reaction is L-threonyl-[protein] + ATP = O-phospho-L-threonyl-[protein] + ADP + H(+). It catalyses the reaction L-tyrosyl-[protein] + ATP = O-phospho-L-tyrosyl-[protein] + ADP + H(+). Inhibited by serine/threonine phosphatase 2A. Functionally, catalyzes the concomitant phosphorylation of a threonine and a tyrosine residue in a Thr-Glu-Tyr sequence located in MAP kinases. Activates the ERK1 and ERK2 MAP kinases. Activates BRAF in a KSR1 or KSR2-dependent manner; by binding to KSR1 or KSR2 releases the inhibitory intramolecular interaction between KSR1 or KSR2 protein kinase and N-terminal domains which promotes KSR1 or KSR2-BRAF dimerization and BRAF activation. In Mus musculus (Mouse), this protein is Dual specificity mitogen-activated protein kinase kinase 2 (Map2k2).